The chain runs to 944 residues: Respiratory burst oxidase homolog protein F (944 aa).

Residues 2-387 (KPFSKNDRRR…VYIMQENWKR (386 aa)) are Cytoplasmic-facing. 2 coiled-coil regions span residues 102–126 (QFSQELKAEAVAKAKQLSQELKRFS) and 157–184 (LEARALRKQRAQLDRTRSSAQRALRGLR). 2 EF-hand-like regions span residues 207–215 (EKNGYIYRS) and 241–252 (RRLKVEKINHDE). EF-hand domains are found at residues 264-299 (SFDSRLQIFFDIVDKNEDGRITEEEVKEIIMLSASA) and 308-343 (QAEEYAALIMEELDPERLGYIELWQLETLLLQKDTY). 7 residues coordinate Ca(2+): D277, N279, D281, R283, E288, D321, and Y327. 2 positions are modified to phosphoserine: S354 and S358. A helical membrane pass occupies residues 388–408 (IWVLSLWIMIMIGLFLWKFFQ). Over 409-475 (YKQKDAFHVM…INFHKTIAGA (67 aa)) the chain is Extracellular. Positions 426-583 (KGAAETLKFN…LFVIVYILLI (158 aa)) constitute a Ferric oxidoreductase domain. Residues 476 to 492 (IVVAVILHIGDHLACDF) traverse the membrane as a helical segment. At 493–527 (PRIVRATEYDYNRYLFHYFQTKQPTYFDLVKGPEG) the chain is on the cytoplasmic side. A helical membrane pass occupies residues 528 to 548 (ITGILMVILMIISFTLATRWF). Residues 549 to 570 (RRNLVKLPKPFDRLTGFNAFWY) are Extracellular-facing. Residues 571–591 (SHHLFVIVYILLILHGIFLYF) form a helical membrane-spanning segment. Residues 592–599 (AKPWYVRT) lie on the Cytoplasmic side of the membrane. A helical membrane pass occupies residues 600–617 (TWMYLAVPVLLYGGERTL). Topologically, residues 618–744 (RYFRSGSYSV…PYGAPAQDYR (127 aa)) are extracellular. The region spanning 622 to 742 (SGSYSVRLLK…DGPYGAPAQD (121 aa)) is the FAD-binding FR-type domain. Residues 745–765 (KYDVLLLVGLGIGATPFISIL) form a helical membrane-spanning segment. The Cytoplasmic segment spans residues 766 to 944 (KDLLNNIVKM…TKFEFHKEHF (179 aa)).

The protein belongs to the RBOH (TC 5.B.1.3) family. Monomer and homodimer. Interacts (via N-terminus) with CIPK26. Interacts (via N-terminus) with SRC2. Not glycosylated. Phosphorylated by CIPK26. As to expression, expressed in roots, stems, seedlings, inflorescences, leaves and guard cells.

It is found in the cell membrane. With respect to regulation, inhibited by diphenylene iodonium (DPI). Its function is as follows. Calcium-dependent NADPH oxidase that generates superoxide. Generates reactive oxygen species (ROS) during incompatible interactions with pathogens and is important in the regulation of the hypersensitive response (HR). Involved in abscisic acid-induced stomatal closing and in UV-B and abscisic acid ROS-dependent signaling. The chain is Respiratory burst oxidase homolog protein F (RBOHF) from Arabidopsis thaliana (Mouse-ear cress).